Reading from the N-terminus, the 191-residue chain is Threonylcarbamoyl-AMP synthase (191 aa).

A YrdC-like domain is found at 7–191 (QSELNDALKI…FHASTGKRLR (185 aa)).

Belongs to the SUA5 family. TsaC subfamily.

Its subcellular location is the cytoplasm. The catalysed reaction is L-threonine + hydrogencarbonate + ATP = L-threonylcarbamoyladenylate + diphosphate + H2O. Its function is as follows. Required for the formation of a threonylcarbamoyl group on adenosine at position 37 (t(6)A37) in tRNAs that read codons beginning with adenine. Catalyzes the conversion of L-threonine, HCO(3)(-)/CO(2) and ATP to give threonylcarbamoyl-AMP (TC-AMP) as the acyladenylate intermediate, with the release of diphosphate. The protein is Threonylcarbamoyl-AMP synthase of Psychromonas ingrahamii (strain DSM 17664 / CCUG 51855 / 37).